The sequence spans 214 residues: Proteasome subunit beta (214 aa).

Residues 1–11 (MLDTSQEIMKG) constitute a propeptide, removed in mature form; by autocatalysis. The Nucleophile role is filled by Thr-12.

It belongs to the peptidase T1B family. In terms of assembly, the 20S proteasome core is composed of 14 alpha and 14 beta subunits that assemble into four stacked heptameric rings, resulting in a barrel-shaped structure. The two inner rings, each composed of seven catalytic beta subunits, are sandwiched by two outer rings, each composed of seven alpha subunits. The catalytic chamber with the active sites is on the inside of the barrel. Has a gated structure, the ends of the cylinder being occluded by the N-termini of the alpha-subunits. Is capped at one or both ends by the proteasome regulatory ATPase, PAN.

Its subcellular location is the cytoplasm. It carries out the reaction Cleavage of peptide bonds with very broad specificity.. With respect to regulation, the formation of the proteasomal ATPase PAN-20S proteasome complex, via the docking of the C-termini of PAN into the intersubunit pockets in the alpha-rings, triggers opening of the gate for substrate entry. Interconversion between the open-gate and close-gate conformations leads to a dynamic regulation of the 20S proteasome proteolysis activity. Functionally, component of the proteasome core, a large protease complex with broad specificity involved in protein degradation. In Methanoculleus marisnigri (strain ATCC 35101 / DSM 1498 / JR1), this protein is Proteasome subunit beta.